Reading from the N-terminus, the 194-residue chain is Xanthine phosphoribosyltransferase (194 aa).

Residues leucine 20 and asparagine 27 each contribute to the xanthine site. 128–132 (ANGQA) is a 5-phospho-alpha-D-ribose 1-diphosphate binding site. Lysine 156 lines the xanthine pocket.

This sequence belongs to the purine/pyrimidine phosphoribosyltransferase family. Xpt subfamily. Homodimer.

The protein resides in the cytoplasm. The enzyme catalyses XMP + diphosphate = xanthine + 5-phospho-alpha-D-ribose 1-diphosphate. It participates in purine metabolism; XMP biosynthesis via salvage pathway; XMP from xanthine: step 1/1. Converts the preformed base xanthine, a product of nucleic acid breakdown, to xanthosine 5'-monophosphate (XMP), so it can be reused for RNA or DNA synthesis. The sequence is that of Xanthine phosphoribosyltransferase from Bacillus licheniformis (strain ATCC 14580 / DSM 13 / JCM 2505 / CCUG 7422 / NBRC 12200 / NCIMB 9375 / NCTC 10341 / NRRL NRS-1264 / Gibson 46).